Consider the following 277-residue polypeptide: S-formylglutathione hydrolase FrmB (277 aa).

Catalysis depends on charge relay system residues Ser-145, Asp-221, and His-254.

The protein belongs to the esterase D family.

It carries out the reaction S-formylglutathione + H2O = formate + glutathione + H(+). Functionally, serine hydrolase involved in the detoxification of formaldehyde. Hydrolyzes S-formylglutathione to glutathione and formate. This is S-formylglutathione hydrolase FrmB (frmB) from Escherichia coli (strain K12 / DH10B).